A 156-amino-acid chain; its full sequence is 6,7-dimethyl-8-ribityllumazine synthase (156 aa).

5-amino-6-(D-ribitylamino)uracil contacts are provided by residues phenylalanine 22, 57 to 59, and 81 to 83; these read AVE and SVI. 86-87 provides a ligand contact to (2S)-2-hydroxy-3-oxobutyl phosphate; the sequence is GT. Histidine 89 acts as the Proton donor in catalysis. Residue phenylalanine 114 participates in 5-amino-6-(D-ribitylamino)uracil binding. (2S)-2-hydroxy-3-oxobutyl phosphate is bound at residue arginine 128.

It belongs to the DMRL synthase family. In terms of assembly, forms an icosahedral capsid composed of 60 subunits, arranged as a dodecamer of pentamers.

The catalysed reaction is (2S)-2-hydroxy-3-oxobutyl phosphate + 5-amino-6-(D-ribitylamino)uracil = 6,7-dimethyl-8-(1-D-ribityl)lumazine + phosphate + 2 H2O + H(+). It functions in the pathway cofactor biosynthesis; riboflavin biosynthesis; riboflavin from 2-hydroxy-3-oxobutyl phosphate and 5-amino-6-(D-ribitylamino)uracil: step 1/2. Its function is as follows. Catalyzes the formation of 6,7-dimethyl-8-ribityllumazine by condensation of 5-amino-6-(D-ribitylamino)uracil with 3,4-dihydroxy-2-butanone 4-phosphate. This is the penultimate step in the biosynthesis of riboflavin. This Aliivibrio fischeri (strain ATCC 700601 / ES114) (Vibrio fischeri) protein is 6,7-dimethyl-8-ribityllumazine synthase.